The chain runs to 411 residues: ATP-dependent Clp protease ATP-binding subunit ClpX (411 aa).

The 49-residue stretch at 1–49 (MSDRDIRCSFCGRTQKEVKKLIAGPGVYICDECVKLAYDIIEEDEEEDV) folds into the ClpX-type ZB domain. Zn(2+)-binding residues include Cys8, Cys11, Cys30, and Cys33. 115–122 (PTGVGKTL) lines the ATP pocket.

The protein belongs to the ClpX chaperone family. In terms of assembly, component of the ClpX-ClpP complex. Forms a hexameric ring that, in the presence of ATP, binds to fourteen ClpP subunits assembled into a disk-like structure with a central cavity, resembling the structure of eukaryotic proteasomes.

ATP-dependent specificity component of the Clp protease. It directs the protease to specific substrates. Can perform chaperone functions in the absence of ClpP. This chain is ATP-dependent Clp protease ATP-binding subunit ClpX, found in Dictyoglomus thermophilum (strain ATCC 35947 / DSM 3960 / H-6-12).